The following is a 556-amino-acid chain: Arginine--tRNA ligase (556 aa).

Residues 134–144 carry the 'HIGH' region motif; it reads ANPTGPLHIGH.

Belongs to the class-I aminoacyl-tRNA synthetase family. In terms of assembly, monomer.

The protein localises to the cytoplasm. The catalysed reaction is tRNA(Arg) + L-arginine + ATP = L-arginyl-tRNA(Arg) + AMP + diphosphate. This Micrococcus luteus (strain ATCC 4698 / DSM 20030 / JCM 1464 / CCM 169 / CCUG 5858 / IAM 1056 / NBRC 3333 / NCIMB 9278 / NCTC 2665 / VKM Ac-2230) (Micrococcus lysodeikticus) protein is Arginine--tRNA ligase.